The primary structure comprises 513 residues: Dentin matrix acidic phosphoprotein 1 (513 aa).

The N-terminal stretch at 1–16 (MKISILLMFLWGLSCA) is a signal peptide. The segment at 23-513 (QNNESEDSEE…QDDNDCQDGY (491 aa)) is disordered. N-linked (GlcNAc...) asparagine glycosylation occurs at Asn-25. Residues 46–60 (ESSESSEGSKVSSEE) show a composition bias toward low complexity. The segment covering 101-119 (DKDDDEDDSGDDTFGDDDS) has biased composition (acidic residues). A compositionally biased stretch (polar residues) spans 143–162 (TIQASEESAPQGQDSAQDTT). Residues 163–180 (SESRELDNEDRVDSKPEG) show a composition bias toward basic and acidic residues. A compositionally biased stretch (acidic residues) spans 208–220 (SELDDEGMQSDDP). The span at 245-257 (NSEQANTQDSGGS) shows a compositional bias: polar residues. Positions 275 to 287 (EEDDRSELDDNNT) are enriched in acidic residues. N-linked (GlcNAc...) asparagine glycosylation occurs at Asn-285. Over residues 296 to 307 (TENSNSRDTGLS) the composition is skewed to polar residues. Positions 309–325 (PRRDSKGDSQEDSKENL) are enriched in basic and acidic residues. 3 N-linked (GlcNAc...) asparagine glycosylation sites follow: Asn-324, Asn-345, and Asn-351. Low complexity predominate over residues 337–354 (SSESSQEANLSSQENSSE). The Cell attachment site signature appears at 364–366 (RGD). The segment covering 376–386 (EDQEDSDSSEE) has biased composition (acidic residues). Residues Asn-413 and Asn-426 are each glycosylated (N-linked (GlcNAc...) asparagine). The span at 417–426 (ESPESPEDEN) shows a compositional bias: acidic residues. A compositionally biased stretch (low complexity) spans 427–442 (SSSQEGLQSHSSSAES). An N-linked (GlcNAc...) asparagine glycan is attached at Asn-467. Positions 484 to 502 (IEIESRKLTVDAYHNKPIG) are enriched in basic and acidic residues. Residues 503-513 (DQDDNDCQDGY) show a composition bias toward acidic residues.

As to quaternary structure, interacts with importin alpha. Post-translationally, phosphorylated in the cytosol and extracellular matrix and unphosphorylated in the nucleus. Phosphorylation is necessary for nucleocytoplasmic transport and may be catalyzed by a nuclear isoform of CK2 and can be augmented by calcium. Phosphorylated (in vitro) by FAM20C in the extracellular medium at sites within the S-x-E/pS motif. In terms of tissue distribution, expressed in tooth particularly in odontoblast, ameloblast and cementoblast.

Its subcellular location is the nucleus. It is found in the cytoplasm. The protein localises to the secreted. It localises to the extracellular space. The protein resides in the extracellular matrix. Functionally, may have a dual function during osteoblast differentiation. In the nucleus of undifferentiated osteoblasts, unphosphorylated form acts as a transcriptional component for activation of osteoblast-specific genes like osteocalcin. During the osteoblast to osteocyte transition phase it is phosphorylated and exported into the extracellular matrix, where it regulates nucleation of hydroxyapatite. The polypeptide is Dentin matrix acidic phosphoprotein 1 (DMP1) (Homo sapiens (Human)).